A 273-amino-acid chain; its full sequence is Putative pyruvate, phosphate dikinase regulatory protein (273 aa).

ADP is bound at residue 149 to 156 (GPSRTSKT).

The protein belongs to the pyruvate, phosphate/water dikinase regulatory protein family. PDRP subfamily.

The catalysed reaction is N(tele)-phospho-L-histidyl/L-threonyl-[pyruvate, phosphate dikinase] + ADP = N(tele)-phospho-L-histidyl/O-phospho-L-threonyl-[pyruvate, phosphate dikinase] + AMP + H(+). It carries out the reaction N(tele)-phospho-L-histidyl/O-phospho-L-threonyl-[pyruvate, phosphate dikinase] + phosphate + H(+) = N(tele)-phospho-L-histidyl/L-threonyl-[pyruvate, phosphate dikinase] + diphosphate. Bifunctional serine/threonine kinase and phosphorylase involved in the regulation of the pyruvate, phosphate dikinase (PPDK) by catalyzing its phosphorylation/dephosphorylation. In Rickettsia massiliae (strain Mtu5), this protein is Putative pyruvate, phosphate dikinase regulatory protein.